The chain runs to 424 residues: Folate-like transporter 3 (424 aa).

An N-linked (GlcNAc...) asparagine glycan is attached at Asn35. 5 consecutive transmembrane segments (helical) span residues 55–75 (VALI…ILII), 78–98 (LSYF…CMQL), 101–119 (LFYG…YIYV), 136–156 (ALLV…GLNW), and 164–184 (IINL…PHVP). An N-linked (GlcNAc...) asparagine glycan is attached at Asn254. A run of 3 helical transmembrane segments spans residues 313–333 (GLLF…CYII), 361–381 (LFGI…AIVI), and 392–412 (FVVY…IFGI).

The protein belongs to the reduced folate carrier (RFC) transporter (TC 2.A.48) family.

Its subcellular location is the membrane. In Caenorhabditis elegans, this protein is Folate-like transporter 3 (folt-3).